We begin with the raw amino-acid sequence, 208 residues long: Ribosomal RNA large subunit methyltransferase E (208 aa).

S-adenosyl-L-methionine-binding residues include G62, W64, D82, D98, and D123. The active-site Proton acceptor is the K163.

The protein belongs to the class I-like SAM-binding methyltransferase superfamily. RNA methyltransferase RlmE family.

Its subcellular location is the cytoplasm. The catalysed reaction is uridine(2552) in 23S rRNA + S-adenosyl-L-methionine = 2'-O-methyluridine(2552) in 23S rRNA + S-adenosyl-L-homocysteine + H(+). Specifically methylates the uridine in position 2552 of 23S rRNA at the 2'-O position of the ribose in the fully assembled 50S ribosomal subunit. The sequence is that of Ribosomal RNA large subunit methyltransferase E from Actinobacillus pleuropneumoniae serotype 5b (strain L20).